The following is a 493-amino-acid chain: Non-cyanogenic beta-glucosidase (493 aa).

Positions 1-18 are cleaved as a signal peptide; sequence MDFIVAIFALFVISSFTI. Asparagine 34 carries an N-linked (GlcNAc...) asparagine glycan. A beta-D-glucoside is bound by residues glutamine 54, histidine 158, and 203–204; that span reads NE. Glutamate 204 serves as the catalytic Proton donor. The N-linked (GlcNAc...) asparagine glycan is linked to asparagine 335. Position 346 (tyrosine 346) interacts with a beta-D-glucoside. Residues asparagine 371 and asparagine 412 are each glycosylated (N-linked (GlcNAc...) asparagine). Residues glutamate 422, tryptophan 471, 478–479, and phenylalanine 487 contribute to the a beta-D-glucoside site; that span reads EW. Residue glutamate 422 is the Nucleophile of the active site.

The protein belongs to the glycosyl hydrolase 1 family. As to expression, leaves.

The catalysed reaction is Hydrolysis of terminal, non-reducing beta-D-glucosyl residues with release of beta-D-glucose.. This Trifolium repens (Creeping white clover) protein is Non-cyanogenic beta-glucosidase.